A 95-amino-acid polypeptide reads, in one-letter code: Citrate lyase acyl carrier protein (95 aa).

Ser14 is modified (O-(phosphoribosyl dephospho-coenzyme A)serine).

This sequence belongs to the CitD family. As to quaternary structure, oligomer with a subunit composition of (alpha,beta,gamma)6.

The protein resides in the cytoplasm. Functionally, covalent carrier of the coenzyme of citrate lyase. The protein is Citrate lyase acyl carrier protein of Haemophilus ducreyi (strain 35000HP / ATCC 700724).